Consider the following 477-residue polypeptide: Protein kinase C and casein kinase substrate in neurons protein 2 (477 aa).

The F-BAR domain maps to 11–282 (VEVSSDSFWE…AIKSADAMED (272 aa)). Positions 25–274 (KRTVKRIDDG…SIYRELEYAI (250 aa)) form a coiled coil. Composition is skewed to basic and acidic residues over residues 163-176 (CKEE…ETNS) and 186-216 (QLKK…KDLD). Disordered stretches follow at residues 163–218 (CKEE…LDGT) and 314–412 (RREK…PFDE). The span at 328–341 (GISQSGEQSSIQNQ) shows a compositional bias: low complexity. Residues 342-357 (HSSHLSVQSAQSTNNP) show a composition bias toward polar residues. The short motif at 356 to 358 (NPF) is the NPF1 element. Basic and acidic residues predominate over residues 370–388 (TENKKIENVGSYEKTHPAE). Polar residues predominate over residues 395–407 (NNPFNPSDTNGDN). The NPF2 signature appears at 396–398 (NPF). The short motif at 408–410 (NPF) is the NPF3 element. The SH3 domain maps to 417–477 (TLEVRVRALY…YPANYVESVQ (61 aa)).

Belongs to the PACSIN family. In terms of assembly, interacts with adam13 through the SH3 domains. In terms of processing, phosphorylated. Ubiquitously expressed with higher expression in the ectoderm, the neuroectoderm, and dorsal mesoderm layers.

It localises to the cytoplasm. The protein resides in the cytoskeleton. The protein localises to the cytoplasmic vesicle membrane. It is found in the cell projection. Its subcellular location is the ruffle membrane. It localises to the early endosome. The protein resides in the recycling endosome membrane. The protein localises to the cell membrane. It is found in the membrane. Its subcellular location is the caveola. It localises to the cell junction. The protein resides in the adherens junction. Its function is as follows. Regulates the morphogenesis and endocytosis of caveolae. Lipid-binding protein that is able to promote the tubulation of the phosphatidic acid-containing membranes it preferentially binds. Plays a role in intracellular vesicle-mediated transport. Involved in the endocytosis of cell-surface receptors like the EGF receptor, contributing to its internalization in the absence of EGF stimulus. In Xenopus laevis (African clawed frog), this protein is Protein kinase C and casein kinase substrate in neurons protein 2 (pacsin2).